A 201-amino-acid polypeptide reads, in one-letter code: Probable GTP-binding protein EngB (201 aa).

An EngB-type G domain is found at 21 to 191; the sequence is PEAQIALAGR…WQELARAAGV (171 aa). Residues 29 to 36, 56 to 60, 75 to 78, 142 to 145, and 168 to 172 contribute to the GTP site; these read GRSNVGKS, GKTRS, DLPG, TKAD, and VLTSS. Mg(2+)-binding residues include Ser-36 and Thr-58.

It belongs to the TRAFAC class TrmE-Era-EngA-EngB-Septin-like GTPase superfamily. EngB GTPase family. The cofactor is Mg(2+).

Necessary for normal cell division and for the maintenance of normal septation. The polypeptide is Probable GTP-binding protein EngB (Desulfovibrio desulfuricans (strain ATCC 27774 / DSM 6949 / MB)).